Here is a 1068-residue protein sequence, read N- to C-terminus: Carbamoyl phosphate synthase large chain (1068 aa).

A carboxyphosphate synthetic domain region spans residues 1–401; the sequence is MPRRTDLHRI…SLLKAVRSLE (401 aa). The ATP site is built by R129, R169, G175, G176, Q208, I210, E215, G241, V242, H243, Q284, and E298. Residues 133–327 form the ATP-grasp 1 domain; that stretch reads KQLMDELGQP…IAKIAAKIAV (195 aa). Mg(2+)-binding residues include Q284, E298, and N300. Positions 284, 298, and 300 each coordinate Mn(2+). The segment at 402–546 is oligomerization domain; the sequence is IGVDHLALRE…YSTYEMENES (145 aa). Positions 547–935 are carbamoyl phosphate synthetic domain; sequence KKSQRPSVLV…ALYKVFEAAN (389 aa). The ATP-grasp 2 domain maps to 671 to 867; it reads ESLLAELGIP…MAEVATRIIL (197 aa). Residues R707, R746, L748, E752, G777, V778, H779, S780, Q820, and E838 each coordinate ATP. Residues Q820, E838, and N840 each coordinate Mg(2+). The Mn(2+) site is built by Q820, E838, and N840. One can recognise an MGS-like domain in the interval 936 to 1068; sequence LHVPEYGKIL…ESRVFSTESI (133 aa). An allosteric domain region spans residues 936–1068; it reads LHVPEYGKIL…ESRVFSTESI (133 aa).

The protein belongs to the CarB family. In terms of assembly, composed of two chains; the small (or glutamine) chain promotes the hydrolysis of glutamine to ammonia, which is used by the large (or ammonia) chain to synthesize carbamoyl phosphate. Tetramer of heterodimers (alpha,beta)4. Requires Mg(2+) as cofactor. Mn(2+) serves as cofactor.

The enzyme catalyses hydrogencarbonate + L-glutamine + 2 ATP + H2O = carbamoyl phosphate + L-glutamate + 2 ADP + phosphate + 2 H(+). The catalysed reaction is hydrogencarbonate + NH4(+) + 2 ATP = carbamoyl phosphate + 2 ADP + phosphate + 2 H(+). Its pathway is amino-acid biosynthesis; L-arginine biosynthesis; carbamoyl phosphate from bicarbonate: step 1/1. It functions in the pathway pyrimidine metabolism; UMP biosynthesis via de novo pathway; (S)-dihydroorotate from bicarbonate: step 1/3. Large subunit of the glutamine-dependent carbamoyl phosphate synthetase (CPSase). CPSase catalyzes the formation of carbamoyl phosphate from the ammonia moiety of glutamine, carbonate, and phosphate donated by ATP, constituting the first step of 2 biosynthetic pathways, one leading to arginine and/or urea and the other to pyrimidine nucleotides. The large subunit (synthetase) binds the substrates ammonia (free or transferred from glutamine from the small subunit), hydrogencarbonate and ATP and carries out an ATP-coupled ligase reaction, activating hydrogencarbonate by forming carboxy phosphate which reacts with ammonia to form carbamoyl phosphate. This is Carbamoyl phosphate synthase large chain from Cutibacterium acnes (strain DSM 16379 / KPA171202) (Propionibacterium acnes).